The sequence spans 438 residues: Histidine--tRNA ligase (438 aa).

It belongs to the class-II aminoacyl-tRNA synthetase family. As to quaternary structure, homodimer.

The protein localises to the cytoplasm. It catalyses the reaction tRNA(His) + L-histidine + ATP = L-histidyl-tRNA(His) + AMP + diphosphate + H(+). This is Histidine--tRNA ligase (hisS) from Thermobifida fusca (strain YX).